The chain runs to 282 residues: Ribosome biogenesis GTPase A (282 aa).

The region spanning 14–178 (RREVTEKLKL…LLDTPGILWP (165 aa)) is the CP-type G domain. Residues 58–61 (NKAD), 86–87 (NS), 130–135 (NVGKST), and Gly-174 each bind GTP.

It belongs to the TRAFAC class YlqF/YawG GTPase family. MTG1 subfamily. Interacts with ctc. Interacts with the immature 50S ribosome subunit. 2 molecules of RbgA bind to one 50S subunit.

It is found in the cytoplasm. Functionally, essential protein that is required for a late step of 50S ribosomal subunit assembly. Has GTPase activity that is stimulated by interaction with the immature 50S ribosome subunit. Binds to the 23S rRNA. Required for the association of ribosomal proteins RplP and RpmA with the large subunit. The sequence is that of Ribosome biogenesis GTPase A (rbgA) from Bacillus subtilis (strain 168).